The following is an 86-amino-acid chain: NAD(P)H-quinone oxidoreductase subunit O (86 aa).

Belongs to the complex I NdhO subunit family. NDH-1 can be composed of about 15 different subunits; different subcomplexes with different compositions have been identified which probably have different functions.

The protein localises to the cellular thylakoid membrane. It carries out the reaction a plastoquinone + NADH + (n+1) H(+)(in) = a plastoquinol + NAD(+) + n H(+)(out). The enzyme catalyses a plastoquinone + NADPH + (n+1) H(+)(in) = a plastoquinol + NADP(+) + n H(+)(out). In terms of biological role, NDH-1 shuttles electrons from an unknown electron donor, via FMN and iron-sulfur (Fe-S) centers, to quinones in the respiratory and/or the photosynthetic chain. The immediate electron acceptor for the enzyme in this species is believed to be plastoquinone. Couples the redox reaction to proton translocation, and thus conserves the redox energy in a proton gradient. Cyanobacterial NDH-1 also plays a role in inorganic carbon-concentration. This chain is NAD(P)H-quinone oxidoreductase subunit O, found in Prochlorococcus marinus (strain SARG / CCMP1375 / SS120).